Consider the following 275-residue polypeptide: 2,3,4,5-tetrahydropyridine-2,6-dicarboxylate N-succinyltransferase (275 aa).

Positions 104 and 141 each coordinate substrate.

It belongs to the transferase hexapeptide repeat family. Homotrimer.

It is found in the cytoplasm. It catalyses the reaction (S)-2,3,4,5-tetrahydrodipicolinate + succinyl-CoA + H2O = (S)-2-succinylamino-6-oxoheptanedioate + CoA. It participates in amino-acid biosynthesis; L-lysine biosynthesis via DAP pathway; LL-2,6-diaminopimelate from (S)-tetrahydrodipicolinate (succinylase route): step 1/3. In Aeromonas hydrophila subsp. hydrophila (strain ATCC 7966 / DSM 30187 / BCRC 13018 / CCUG 14551 / JCM 1027 / KCTC 2358 / NCIMB 9240 / NCTC 8049), this protein is 2,3,4,5-tetrahydropyridine-2,6-dicarboxylate N-succinyltransferase.